The sequence spans 357 residues: DNA replication and repair protein RecF (357 aa).

30–37 (GANGSGKT) serves as a coordination point for ATP.

This sequence belongs to the RecF family.

Its subcellular location is the cytoplasm. Its function is as follows. The RecF protein is involved in DNA metabolism; it is required for DNA replication and normal SOS inducibility. RecF binds preferentially to single-stranded, linear DNA. It also seems to bind ATP. The chain is DNA replication and repair protein RecF from Escherichia fergusonii (strain ATCC 35469 / DSM 13698 / CCUG 18766 / IAM 14443 / JCM 21226 / LMG 7866 / NBRC 102419 / NCTC 12128 / CDC 0568-73).